The chain runs to 464 residues: Adenosylhomocysteinase (464 aa).

Positions 56, 131, and 190 each coordinate substrate. 191 to 193 (TTT) serves as a coordination point for NAD(+). Lys220 and Asp224 together coordinate substrate. Residues Asn225, 254–259 (GFGDVG), Glu277, Asn312, 333–335 (IGH), and Asn378 each bind NAD(+).

The protein belongs to the adenosylhomocysteinase family. The cofactor is NAD(+).

It localises to the cytoplasm. It carries out the reaction S-adenosyl-L-homocysteine + H2O = L-homocysteine + adenosine. It functions in the pathway amino-acid biosynthesis; L-homocysteine biosynthesis; L-homocysteine from S-adenosyl-L-homocysteine: step 1/1. May play a key role in the regulation of the intracellular concentration of adenosylhomocysteine. This chain is Adenosylhomocysteinase, found in Zymomonas mobilis subsp. mobilis (strain ATCC 31821 / ZM4 / CP4).